Consider the following 275-residue polypeptide: Large ribosomal subunit protein uL2c (275 aa).

A disordered region spans residues 224–275 (AMNPVDHPHGGGEGRTPIGRKKPVTPWGYSALGKKSRKRNRYSDASILRRRE).

Belongs to the universal ribosomal protein uL2 family. As to quaternary structure, part of the 50S ribosomal subunit.

It is found in the plastid. Its subcellular location is the chloroplast. The protein is Large ribosomal subunit protein uL2c (rpl2) of Picea abies (Norway spruce).